The chain runs to 1273 residues: DNA-directed RNA polymerase subunit beta (1273 aa).

The interval 1252-1273 is disordered; the sequence is ADDQDLVVSSNDEEVSENDERS.

The protein belongs to the RNA polymerase beta chain family. The RNAP catalytic core consists of 2 alpha, 1 beta, 1 beta' and 1 omega subunit. When a sigma factor is associated with the core the holoenzyme is formed, which can initiate transcription.

The catalysed reaction is RNA(n) + a ribonucleoside 5'-triphosphate = RNA(n+1) + diphosphate. DNA-dependent RNA polymerase catalyzes the transcription of DNA into RNA using the four ribonucleoside triphosphates as substrates. The polypeptide is DNA-directed RNA polymerase subunit beta (Dehalococcoides mccartyi (strain ATCC BAA-2100 / JCM 16839 / KCTC 5957 / BAV1)).